Here is a 180-residue protein sequence, read N- to C-terminus: ATP synthase subunit delta, chloroplastic (180 aa).

The protein belongs to the ATPase delta chain family. F-type ATPases have 2 components, F(1) - the catalytic core - and F(0) - the membrane proton channel. F(1) has five subunits: alpha(3), beta(3), gamma(1), delta(1), epsilon(1). CF(0) has four main subunits: a(1), b(1), b'(1) and c(10-14). The alpha and beta chains form an alternating ring which encloses part of the gamma chain. F(1) is attached to F(0) by a central stalk formed by the gamma and epsilon chains, while a peripheral stalk is formed by the delta, b and b' chains.

The protein resides in the plastid. Its subcellular location is the chloroplast thylakoid membrane. Functionally, f(1)F(0) ATP synthase produces ATP from ADP in the presence of a proton or sodium gradient. F-type ATPases consist of two structural domains, F(1) containing the extramembraneous catalytic core and F(0) containing the membrane proton channel, linked together by a central stalk and a peripheral stalk. During catalysis, ATP synthesis in the catalytic domain of F(1) is coupled via a rotary mechanism of the central stalk subunits to proton translocation. Its function is as follows. This protein is part of the stalk that links CF(0) to CF(1). It either transmits conformational changes from CF(0) to CF(1) or is implicated in proton conduction. This chain is ATP synthase subunit delta, chloroplastic, found in Emiliania huxleyi (Coccolithophore).